A 329-amino-acid chain; its full sequence is GTP 3',8-cyclase (329 aa).

In terms of domain architecture, Radical SAM core spans 8–234 (AFARKFYYLR…QLRQRSDGPA (227 aa)). Arginine 17 provides a ligand contact to GTP. Residues cysteine 24 and cysteine 28 each contribute to the [4Fe-4S] cluster site. Tyrosine 30 is a binding site for S-adenosyl-L-methionine. Cysteine 31 is a [4Fe-4S] cluster binding site. Arginine 68 serves as a coordination point for GTP. Glycine 72 lines the S-adenosyl-L-methionine pocket. Threonine 99 contacts GTP. Serine 123 provides a ligand contact to S-adenosyl-L-methionine. A GTP-binding site is contributed by lysine 160. Methionine 194 contacts S-adenosyl-L-methionine. The [4Fe-4S] cluster site is built by cysteine 257 and cysteine 260. 262 to 264 (RLR) is a GTP binding site. [4Fe-4S] cluster is bound at residue cysteine 274.

The protein belongs to the radical SAM superfamily. MoaA family. Monomer and homodimer. [4Fe-4S] cluster is required as a cofactor.

The enzyme catalyses GTP + AH2 + S-adenosyl-L-methionine = (8S)-3',8-cyclo-7,8-dihydroguanosine 5'-triphosphate + 5'-deoxyadenosine + L-methionine + A + H(+). The protein operates within cofactor biosynthesis; molybdopterin biosynthesis. In terms of biological role, catalyzes the cyclization of GTP to (8S)-3',8-cyclo-7,8-dihydroguanosine 5'-triphosphate. The protein is GTP 3',8-cyclase of Salmonella paratyphi B (strain ATCC BAA-1250 / SPB7).